The chain runs to 437 residues: Testis-specific Y-encoded-like protein 1 (437 aa).

The segment at 1–81 (MSGLDGVKRT…QDAAGRGGTP (81 aa)) is disordered. A compositionally biased stretch (polar residues) spans 11–26 (TPLQTHSIIISDQVPS). Residues 28-40 (QDAHQYLRLRDQS) are compositionally biased toward basic and acidic residues. Residue Lys-156 forms a Glycyl lysine isopeptide (Lys-Gly) (interchain with G-Cter in SUMO2) linkage.

The protein belongs to the nucleosome assembly protein (NAP) family. Post-translationally, ubiquitinated by the CRL2(APPBP2) complex, which recognizes the Arg-Xaa-Xaa-Gly sequence at the C-terminus, leading to its degradation. Expressed in testis, ovary, liver, spleen, brain, kidney, prostate, lung, liver, and heart.

The protein resides in the nucleus. Its subcellular location is the nucleolus. In Homo sapiens (Human), this protein is Testis-specific Y-encoded-like protein 1 (TSPYL1).